The chain runs to 647 residues: Type II methyltransferase M.FokI (647 aa).

Short sequence motifs (adenine-specific methylase) lie at residues 218-221 (DPPY) and 548-551 (DPPY).

This sequence belongs to the N(4)/N(6)-methyltransferase family. As to quaternary structure, monomer.

The catalysed reaction is a 2'-deoxyadenosine in DNA + S-adenosyl-L-methionine = an N(6)-methyl-2'-deoxyadenosine in DNA + S-adenosyl-L-homocysteine + H(+). Functionally, an alpha subtype methylase that recognizes the asymmetric double-stranded sequence 5'-GGATG-3', methylates A-3 of both strands, and protects the DNA from cleavage by the FokI endonuclease. The sequence is that of Type II methyltransferase M.FokI from Planomicrobium okeanokoites (Planococcus okeanokoites).